The chain runs to 88 residues: Small ribosomal subunit protein uS17 (88 aa).

Belongs to the universal ribosomal protein uS17 family. In terms of assembly, part of the 30S ribosomal subunit.

One of the primary rRNA binding proteins, it binds specifically to the 5'-end of 16S ribosomal RNA. The chain is Small ribosomal subunit protein uS17 from Helicobacter hepaticus (strain ATCC 51449 / 3B1).